The following is a 304-amino-acid chain: Mitochondrial glycine transporter (304 aa).

Solcar repeat units lie at residues 3–82, 106–186, and 209–293; these read GKSK…VREA, ENLI…LKVA, and SSAM…LVKR. The next 6 membrane-spanning stretches (helical) occupy residues 9 to 34, 57 to 83, 108 to 133, 161 to 184, 213 to 239, and 268 to 286; these read IYAGFTSGLVSAVVLQPFDLLKTRVQ, GTLPSALRMSVGSAMYFTCLNTVREAV, LISGGLVRGTVGLLVMPITVIKVRYE, GWAATFARDAPYAGLYMLFYEQLK, INSVAAATSAGIATTCTNPFDTVKTRM, and GLALRICRKACQAGISWCI.

It belongs to the mitochondrial carrier (TC 2.A.29) family. SLC25A38 subfamily.

Its subcellular location is the mitochondrion inner membrane. It catalyses the reaction glycine(in) = glycine(out). In terms of biological role, mitochondrial glycine transporter that imports glycine into the mitochondrial matrix. Plays an important role in providing glycine for the first enzymatic step in heme biosynthesis, the condensation of glycine with succinyl-CoA to produce 5-aminolevulinate (ALA) in the mitochondrial matrix. This chain is Mitochondrial glycine transporter, found in Yarrowia lipolytica (strain CLIB 122 / E 150) (Yeast).